The sequence spans 62 residues: UPF0434 protein Avi_4243 (62 aa).

This sequence belongs to the UPF0434 family.

This is UPF0434 protein Avi_4243 from Allorhizobium ampelinum (strain ATCC BAA-846 / DSM 112012 / S4) (Agrobacterium vitis (strain S4)).